Here is a 261-residue protein sequence, read N- to C-terminus: Putative cysteine protease YopT-like y4zC (261 aa).

Positions 1 to 15 are enriched in polar residues; the sequence is MHSPISGSFTSSTQV. 2 disordered regions span residues 1–48 and 54–73; these read MHSP…CPDK and SKPQASDPNNPSTSSPARPS. Residues 61 to 73 show a composition bias toward low complexity; it reads PNNPSTSSPARPS. Active-site residues include cysteine 93, histidine 205, and aspartate 220.

It belongs to the peptidase C58 family.

Functionally, potential cysteine protease, which may play a central role after invasion of host cell. The chain is Putative cysteine protease YopT-like y4zC from Sinorhizobium fredii (strain NBRC 101917 / NGR234).